We begin with the raw amino-acid sequence, 983 residues long: Next to BRCA1 gene 1 protein (983 aa).

One can recognise a PB1 domain in the interval 4–86 (QVTLNVTFKN…NQLQMQVHEG (83 aa)). Ser117 is subject to Phosphoserine. The interval 126–149 (MKTTEEPTAEARSPVPCDTDKPQD) is disordered. The ZZ-type zinc-finger motif lies at 214–266 (SWHIACSHCQKRIVGVRYQCSLCPSYNICEDCEAGPYSHDTNHILLKFRRPVV). Zn(2+)-binding residues include Cys219, Cys222, Cys233, Cys236, Cys242, Cys245, His252, and His256. ATG8 family proteins-binding stretches follow at residues 544–638 (ASER…PASV) and 745–756 (ASSEDYIIILPE). A Phosphothreonine modification is found at Thr588. Ser592 and Ser598 each carry phosphoserine. The disordered stretch occupies residues 611 to 645 (EESEGAGLKASPDSTVLTKRKAETPASVEETEEDL). A disordered region spans residues 768–813 (MYSSALSQPGLERGAEGEPGIESGQEPAEARERLPERESQPKEQSI). A compositionally biased stretch (basic and acidic residues) spans 795-808 (AEARERLPERESQP). Ser855 is modified (phosphoserine). Residues 867–894 (DHVRGEPRGSTGLANSRQKSCDHSRHHN) form a disordered region. One can recognise a UBA domain in the interval 930–974 (SEDQTAALMAHLFEMGFCDRQLNLRLLRKHNHNILQVVTELLQVN).

Homooligomer and heterooligomer. Interacts with TRIM55. Interacts with titin/TTN. Interacts with RNF29, USP8, MAP1LC3A, MAP1LC3B, MAP1LC3C, GABARAP, GABARAPL1 and GABARAPL2. Binds to ubiquitin and ubiquitinated proteins. Interacts with SQSTM1. Interacts with TAX1BP1. Interacts with IRF3; this interaction mediates autophagic degradation of IRF3. Interacts with IL12A and IL12B. Phosphorylated by GSK3A; this phosphorylation inhibits NBR1 involvement in the formation of ubiquitinated protein aggregates.

Its subcellular location is the cytoplasm. It localises to the cytoplasmic vesicle. It is found in the autophagosome. The protein localises to the lysosome. The protein resides in the myofibril. Its subcellular location is the sarcomere. It localises to the m line. In terms of biological role, ubiquitin-binding autophagy adapter that participates in different processes including host defense or intracellular homeostasis. Possesses a double function during the selective autophagy by acting as a shuttle bringing ubiquitinated proteins to autophagosomes and also by participating in the formation of protein aggregates. Plays a role in the regulation of the innate immune response by modulating type I interferon production and targeting ubiquitinated IRF3 for autophagic degradation. In response to oxidative stress, promotes an increase in SQSTM1 levels, phosphorylation, and body formation by preventing its autophagic degradation. In turn, activates the KEAP1-NRF2/NFE2L2 antioxidant pathway. Also plays non-autophagy role by mediating the shuttle of IL-12 to late endosome for subsequent secretion. The polypeptide is Next to BRCA1 gene 1 protein (Nbr1) (Rattus norvegicus (Rat)).